A 227-amino-acid chain; its full sequence is DNA repair protein RecO (227 aa).

It belongs to the RecO family.

Involved in DNA repair and RecF pathway recombination. The chain is DNA repair protein RecO from Pseudomonas putida (strain ATCC 47054 / DSM 6125 / CFBP 8728 / NCIMB 11950 / KT2440).